The chain runs to 500 residues: Lysine--tRNA ligase (500 aa).

Positions 410 and 417 each coordinate Mg(2+).

This sequence belongs to the class-II aminoacyl-tRNA synthetase family. Homodimer. Mg(2+) serves as cofactor.

The protein resides in the cytoplasm. The catalysed reaction is tRNA(Lys) + L-lysine + ATP = L-lysyl-tRNA(Lys) + AMP + diphosphate. The polypeptide is Lysine--tRNA ligase (Shewanella loihica (strain ATCC BAA-1088 / PV-4)).